Consider the following 143-residue polypeptide: Large ribosomal subunit protein uL15 (143 aa).

Composition is skewed to basic residues over residues Met-1 to Ser-14 and Lys-23 to Gly-38. The disordered stretch occupies residues Met-1–Gly-38.

It belongs to the universal ribosomal protein uL15 family. Part of the 50S ribosomal subunit.

Its function is as follows. Binds to the 23S rRNA. This Methanococcus maripaludis (strain DSM 14266 / JCM 13030 / NBRC 101832 / S2 / LL) protein is Large ribosomal subunit protein uL15.